Here is a 315-residue protein sequence, read N- to C-terminus: Ribosomal RNA small subunit methyltransferase H (315 aa).

Residues 33–35 (GGH), D52, F84, D106, and Q113 each bind S-adenosyl-L-methionine. The disordered stretch occupies residues 290-315 (PITASTSELENNNRSHSAKLRVAEKL). Positions 292-304 (TASTSELENNNRS) are enriched in polar residues.

The protein belongs to the methyltransferase superfamily. RsmH family.

The protein resides in the cytoplasm. It catalyses the reaction cytidine(1402) in 16S rRNA + S-adenosyl-L-methionine = N(4)-methylcytidine(1402) in 16S rRNA + S-adenosyl-L-homocysteine + H(+). Its function is as follows. Specifically methylates the N4 position of cytidine in position 1402 (C1402) of 16S rRNA. This is Ribosomal RNA small subunit methyltransferase H from Lactobacillus helveticus (strain DPC 4571).